Consider the following 656-residue polypeptide: Sulfate transporter 1.3 (656 aa).

Residues 1–30 (MSARAHPVDDDGEISPVERSSPRQANTPYV) are disordered. The Cytoplasmic portion of the chain corresponds to 1-94 (MSARAHPVDD…GRKYNLKLFR (94 aa)). Residues 95–115 (GDLIAGLTIASLCIPQDIGYA) form a helical membrane-spanning segment. Residues 116 to 119 (KLAS) lie on the Extracellular side of the membrane. A helical transmembrane segment spans residues 120 to 140 (LDPKYGLYSSFVPPLVYACMG). The Cytoplasmic portion of the chain corresponds to 141–144 (SSKD). Residues 145 to 165 (IAIGPVAVVSLLLGTLLRAEI) traverse the membrane as a helical segment. At 166 to 176 (DPNTNPNEYLR) the chain is on the extracellular side. The next 2 membrane-spanning stretches (helical) occupy residues 177 to 197 (LAFT…FFRL) and 198 to 218 (GFLI…GAAI). Topologically, residues 219 to 256 (TIALQQLKGFLGINKFTKKTDIIAVLSSVISSAHHGWN) are extracellular. The chain crosses the membrane as a helical span at residues 257–277 (WQTILISASFLIFLLISKFIG). Residues 278 to 283 (KRNKKL) lie on the Cytoplasmic side of the membrane. A helical transmembrane segment spans residues 284–304 (FWIPAIAPLVSVIISTFFVYI). At 305–342 (TRADKKGVQIVKHLDKGLNPSSLRLIYFSGDYLLKGFR) the chain is on the extracellular side. A helical transmembrane segment spans residues 343-363 (IGVVSGMVALTEAVAIGRTFA). Over 364–375 (AMKDYQIDGNKE) the chain is Cytoplasmic. The chain crosses the membrane as a helical span at residues 376 to 396 (MVALGAMNVIGSMTSCYVSTG). Residues 397–412 (SFSRSAVNFMAGCQTA) are Extracellular-facing. Residues 413–433 (VSNIIMSIVVLLTLLFLTPLF) traverse the membrane as a helical segment. At 434-441 (KYTPNAIL) the chain is on the cytoplasmic side. Residues 442–462 (AAIIINAVIPLVDVNATILIF) traverse the membrane as a helical segment. The Extracellular portion of the chain corresponds to 463–473 (KIDKLDFVACM). Residues 474–494 (GAFFGVIFVSVEIGLLIAVGI) form a helical membrane-spanning segment. Over 495–656 (SFAKILLQVT…SCSPKLSDEV (162 aa)) the chain is Cytoplasmic. The STAS domain maps to 525–648 (QYPEATRIPG…LTVAEAVDSC (124 aa)).

It belongs to the SLC26A/SulP transporter (TC 2.A.53) family. In terms of tissue distribution, expressed in the phloem of cotyledons, hypocotyls and roots.

The protein localises to the membrane. In terms of biological role, high-affinity H(+)/sulfate cotransporter that mediates the loading of sulfate into the sieve tube. Plays a central role in the regulation of sulfate assimilation. In Arabidopsis thaliana (Mouse-ear cress), this protein is Sulfate transporter 1.3 (SULTR1;3).